A 24-amino-acid polypeptide reads, in one-letter code: Conotoxin PIVF (24 aa).

3 cysteine pairs are disulfide-bonded: Cys-2-Cys-10, Cys-3-Cys-15, and Cys-13-Cys-19. Lys-24 carries the lysine amide modification.

This sequence belongs to the conotoxin A superfamily. In terms of tissue distribution, expressed by the venom duct.

The protein localises to the secreted. Functionally, probable neurotoxin with ion channel inhibitor activity. In vivo, elicits dose-dependently excitatory activity upon injection into fish. Its action is slowly reversible. The sequence is that of Conotoxin PIVF from Conus purpurascens (Purple cone).